Reading from the N-terminus, the 836-residue chain is Conserved oligomeric Golgi complex subunit 7 (836 aa).

2 coiled-coil regions span residues Gln29–Glu49 and Leu107–Ala127. The disordered stretch occupies residues Lys246–Ser265.

This sequence belongs to the COG7 family. In terms of assembly, component of the conserved oligomeric Golgi complex which is composed of eight different subunits and is required for normal Golgi morphology and localization. Interacts with COG5 and COG6.

The protein resides in the golgi apparatus membrane. Its function is as follows. Required for normal Golgi function. Necessary for embryo development and pigmentation, especially for the expansion of cells and organs, and for the formation of the organized shoot apical meristem (SAM). Probably involved in the generation of the extra-cellular matrix. The protein is Conserved oligomeric Golgi complex subunit 7 of Arabidopsis thaliana (Mouse-ear cress).